The chain runs to 90 residues: Small ribosomal subunit protein uS17 (90 aa).

This sequence belongs to the universal ribosomal protein uS17 family. As to quaternary structure, part of the 30S ribosomal subunit.

Its function is as follows. One of the primary rRNA binding proteins, it binds specifically to the 5'-end of 16S ribosomal RNA. The chain is Small ribosomal subunit protein uS17 from Methylobacillus flagellatus (strain ATCC 51484 / DSM 6875 / VKM B-1610 / KT).